The following is a 309-amino-acid chain: Zinc finger protein-like 1 homolog (309 aa).

The segment at 1–43 adopts a B box-type; degenerate zinc-finger fold; sequence MGLCKCPKRKVTNLFCYEHRVNVCEFCLVDNHPNCVVQSYLTW. The RING-type; atypical zinc finger occupies 53-101; it reads CSLCKTTLAEGDTIRLNCLHLLHWKCFDEWAANFPATTAPAGYRCPCCS. The disordered stretch occupies residues 200-221; the sequence is GAESSSDTRPLLQLRDADNEEN. Residues 254-274 traverse the membrane as a helical segment; it reads KIALFVIFLAVLALITIIMVM.

It belongs to the ZFPL1 family.

The protein localises to the membrane. This Caenorhabditis elegans protein is Zinc finger protein-like 1 homolog.